The chain runs to 337 residues: Phospholipase A1 1 (337 aa).

The N-terminal stretch at 1–21 is a signal peptide; the sequence is MNFKYSILFICFVKVLDNCYA. A propeptide spanning residues 22–35 is cleaved from the precursor; it reads ADDLTTLRNGTLDR. Cys-41 and Cys-124 are oxidised to a cystine. Ser-174 (nucleophile) is an active-site residue. The active-site Charge relay system is the Asp-202. 2 disulfide bridges follow: Cys-213–Cys-218 and Cys-256–Cys-261. The active-site Charge relay system is His-263. 3 cysteine pairs are disulfide-bonded: Cys-278-Cys-305, Cys-279-Cys-330, and Cys-298-Cys-303.

This sequence belongs to the AB hydrolase superfamily. Lipase family. In terms of tissue distribution, expressed by the venom gland.

It localises to the secreted. The catalysed reaction is a 1,2-diacyl-sn-glycero-3-phosphocholine + H2O = a 2-acyl-sn-glycero-3-phosphocholine + a fatty acid + H(+). Its function is as follows. Catalyzes the hydrolysis of phosphatidylcholine with phospholipase A1 activity. May act as an allergen and induce hemolytic activity. The chain is Phospholipase A1 1 from Polistes dominula (European paper wasp).